Here is a 246-residue protein sequence, read N- to C-terminus: 3-deoxy-manno-octulosonate cytidylyltransferase (246 aa).

The protein belongs to the KdsB family.

The protein localises to the cytoplasm. The catalysed reaction is 3-deoxy-alpha-D-manno-oct-2-ulosonate + CTP = CMP-3-deoxy-beta-D-manno-octulosonate + diphosphate. It functions in the pathway nucleotide-sugar biosynthesis; CMP-3-deoxy-D-manno-octulosonate biosynthesis; CMP-3-deoxy-D-manno-octulosonate from 3-deoxy-D-manno-octulosonate and CTP: step 1/1. Its pathway is bacterial outer membrane biogenesis; lipopolysaccharide biosynthesis. Activates KDO (a required 8-carbon sugar) for incorporation into bacterial lipopolysaccharide in Gram-negative bacteria. The polypeptide is 3-deoxy-manno-octulosonate cytidylyltransferase (Rickettsia prowazekii (strain Madrid E)).